A 167-amino-acid chain; its full sequence is Cytochrome b6-f complex subunit 4 (167 aa).

3 helical membrane passes run 36–56, 95–115, and 131–151; these read LLYI…GLAV, LLGV…PFLE, and TVFL…TLPI.

The protein belongs to the cytochrome b family. PetD subfamily. The 4 large subunits of the cytochrome b6-f complex are cytochrome b6, subunit IV (17 kDa polypeptide, petD), cytochrome f and the Rieske protein, while the 4 small subunits are petG, petL, petM and petN. The complex functions as a dimer.

It localises to the plastid. Its subcellular location is the chloroplast thylakoid membrane. In terms of biological role, component of the cytochrome b6-f complex, which mediates electron transfer between photosystem II (PSII) and photosystem I (PSI), cyclic electron flow around PSI, and state transitions. This is Cytochrome b6-f complex subunit 4 from Calycanthus floridus var. glaucus (Eastern sweetshrub).